Consider the following 417-residue polypeptide: Calreticulin (417 aa).

The signal sequence occupies residues 1–17 (MLLSVPLLLGLLGLAAA). Positions 18–197 (EPAVYFKEQF…NSQVESGSLE (180 aa)) are N-domain. Position 26 (Gln-26) interacts with Ca(2+). Position 48 is an N6-acetyllysine (Lys-48). Ca(2+)-binding residues include Lys-62 and Lys-64. Cys-105 and Cys-137 are disulfide-bonded. Tyr-109, Lys-111, Tyr-128, and Asp-135 together coordinate an alpha-D-glucoside. Position 159 is an N6-acetyllysine (Lys-159). One copy of the 1-1 repeat lies at 191–202 (VESGSLEDDWDF). The tract at residues 191–255 (VESGSLEDDW…DAKKPEDWDE (65 aa)) is 4 X approximate repeats. The segment at 193 to 278 (SGSLEDDWDF…PEYKGEWKPR (86 aa)) is disordered. Positions 198–308 (DDWDFLPPKK…YSPDPSIYAY (111 aa)) are P-domain. The span at 207–251 (KIKDPDASKPEDWDERAKIDDPTDSKPEDWDKPEHIPDPDAKKPE) shows a compositional bias: basic and acidic residues. Lys-209 bears the N6-acetyllysine mark. Repeat copies occupy residues 210-221 (DPDASKPEDWDE), 227-238 (DPTDSKPEDWDK), 244-255 (DPDAKKPEDWDE), 259-269 (GEWEPPVIQNP), 273-283 (GEWKPRQIDNP), and 287-297 (GTWIHPEIDNP). The tract at residues 237-270 (DKPEHIPDPDAKKPEDWDEEMDGEWEPPVIQNPE) is interaction with PPIB. Positions 252–261 (DWDEEMDGEW) are enriched in acidic residues. A 3 X approximate repeats region spans residues 259 to 297 (GEWEPPVIQNPEYKGEWKPRQIDNPDYKGTWIHPEIDNP). The segment at 309-417 (DNFGVLGLDL…DVPGQAKDEL (109 aa)) is C-domain. An alpha-D-glucoside is bound at residue Asp-317. Asp-328 contributes to the Ca(2+) binding site. The interval 350 to 417 (TKAAEKQMKD…DVPGQAKDEL (68 aa)) is disordered. A compositionally biased stretch (basic and acidic residues) spans 352-379 (AAEKQMKDKQDEEQRLKEEEEDKKRKEE). The span at 380–409 (EEAEDKEDDEDKDEDEEDEEDKEEDEEEDV) shows a compositional bias: acidic residues. Positions 414 to 417 (KDEL) match the Prevents secretion from ER motif.

Belongs to the calreticulin family. Monomer. Component of an EIF2 complex at least composed of CELF1/CUGBP1, CALR, CALR3, EIF2S1, EIF2S2, HSP90B1 and HSPA5. Interacts with PDIA3/ERp57 and SPACA9. Interacts with TRIM21. Interacts with NR3C1. Interacts with PPIB. Interacts (via P-domain) with PDIA5. Interacts with GABARAP. Interacts with CLCC1.

The protein localises to the endoplasmic reticulum lumen. The protein resides in the cytoplasm. It is found in the cytosol. It localises to the secreted. Its subcellular location is the extracellular space. The protein localises to the extracellular matrix. The protein resides in the cell surface. It is found in the sarcoplasmic reticulum lumen. It localises to the cytoplasmic vesicle. Its subcellular location is the secretory vesicle. The protein localises to the cortical granule. The protein resides in the cytoplasmic granule. Functionally, calcium-binding chaperone that promotes folding, oligomeric assembly and quality control in the endoplasmic reticulum (ER) via the calreticulin/calnexin cycle. This lectin interacts transiently with almost all of the monoglucosylated glycoproteins that are synthesized in the ER. Interacts with the DNA-binding domain of NR3C1 and mediates its nuclear export. Involved in maternal gene expression regulation. May participate in oocyte maturation via the regulation of calcium homeostasis. The chain is Calreticulin (CALR) from Chlorocebus aethiops (Green monkey).